Reading from the N-terminus, the 95-residue chain is MSYTIAAQVRTEIGKGSSRRLRHADKVPAVIYGPGKEPVAIVFDHKDIINIQENEDFYTSTLTINLDGSDVKVSVKAMQRHAFKPLIEHVDFTYA.

It belongs to the bacterial ribosomal protein bL25 family. Part of the 50S ribosomal subunit; part of the 5S rRNA/L5/L18/L25 subcomplex. Contacts the 5S rRNA. Binds to the 5S rRNA independently of L5 and L18.

Its function is as follows. This is one of the proteins that binds to the 5S RNA in the ribosome where it forms part of the central protuberance. In Shewanella woodyi (strain ATCC 51908 / MS32), this protein is Large ribosomal subunit protein bL25.